The following is a 377-amino-acid chain: Protein RecA (377 aa).

Position 76–83 (76–83 (GPESSGKT)) interacts with ATP. The segment at 346 to 377 (TNGNNGEDHEGTEPVEIEAEDAAPKKGKKGKH) is disordered.

This sequence belongs to the RecA family.

The protein localises to the cytoplasm. Its function is as follows. Can catalyze the hydrolysis of ATP in the presence of single-stranded DNA, the ATP-dependent uptake of single-stranded DNA by duplex DNA, and the ATP-dependent hybridization of homologous single-stranded DNAs. It interacts with LexA causing its activation and leading to its autocatalytic cleavage. This is Protein RecA from Bdellovibrio bacteriovorus (strain ATCC 15356 / DSM 50701 / NCIMB 9529 / HD100).